A 457-amino-acid chain; its full sequence is Putative HD domain-containing protein L394 (457 aa).

Residues 65–206 (RLEHSIGVYD…GIDVDKFDYL (142 aa)) enclose the HD domain.

The sequence is that of Putative HD domain-containing protein L394 from Acanthamoeba polyphaga mimivirus (APMV).